The primary structure comprises 432 residues: Phosphomethylpyrimidine synthase (432 aa).

Residues Asn-69, Met-98, Tyr-127, His-163, 185 to 187 (SRG), 226 to 229 (DACR), and Glu-265 each bind substrate. His-269 provides a ligand contact to Zn(2+). Tyr-292 is a binding site for substrate. His-333 is a binding site for Zn(2+). Residues Cys-409, Cys-412, and Cys-416 each coordinate [4Fe-4S] cluster.

It belongs to the ThiC family. Requires [4Fe-4S] cluster as cofactor.

The enzyme catalyses 5-amino-1-(5-phospho-beta-D-ribosyl)imidazole + S-adenosyl-L-methionine = 4-amino-2-methyl-5-(phosphooxymethyl)pyrimidine + CO + 5'-deoxyadenosine + formate + L-methionine + 3 H(+). It functions in the pathway cofactor biosynthesis; thiamine diphosphate biosynthesis. In terms of biological role, catalyzes the synthesis of the hydroxymethylpyrimidine phosphate (HMP-P) moiety of thiamine from aminoimidazole ribotide (AIR) in a radical S-adenosyl-L-methionine (SAM)-dependent reaction. The polypeptide is Phosphomethylpyrimidine synthase (Pelotomaculum thermopropionicum (strain DSM 13744 / JCM 10971 / SI)).